We begin with the raw amino-acid sequence, 197 residues long: MAVLLPLFLLSFMFTYSNAAVCVCKDANELDLQKVIDFACGGGADCAQIQTTGACYQPNTLKNHCDVAVNSYYQKKASTGATCDFNGAAVISTSPPSTTSSCLSSSSSNGTPTAGYPSTGNSTTASPGTTNPSTGNSTNSTLPTNDKPTSSTITFPDSTTMGPSSSTSGDPNGGEELSVRTTTIILLTTIAAVALRV.

The N-terminal stretch at 1-19 (MAVLLPLFLLSFMFTYSNA) is a signal peptide. Residues 101-113 (SCLSSSSSNGTPT) are compositionally biased toward low complexity. Positions 101-176 (SCLSSSSSNG…TSGDPNGGEE (76 aa)) are disordered. The span at 116–125 (YPSTGNSTTA) shows a compositional bias: polar residues. A compositionally biased stretch (low complexity) spans 126–145 (SPGTTNPSTGNSTNSTLPTN). Polar residues predominate over residues 146 to 155 (DKPTSSTITF). A compositionally biased stretch (low complexity) spans 156-170 (PDSTTMGPSSSTSGD). A lipid anchor (GPI-anchor amidated asparagine) is attached at Asn-172. Residues 173–197 (GGEELSVRTTTIILLTTIAAVALRV) constitute a propeptide, removed in mature form.

As to expression, expressed in the sieve elements.

It localises to the cell membrane. The chain is Carbohydrate-binding X8 domain-containing protein from Arabidopsis thaliana (Mouse-ear cress).